We begin with the raw amino-acid sequence, 361 residues long: S-adenosylmethionine decarboxylase proenzyme (361 aa).

Residues Glu-13 and Glu-16 contribute to the active site. Ser-73 (schiff-base intermediate with substrate; via pyruvic acid) is an active-site residue. Ser-73 is modified (pyruvic acid (Ser); by autocatalysis). Cys-87 (proton donor; for catalytic activity) is an active-site residue. Active-site proton acceptor; for processing activity residues include Ser-236 and His-249.

The protein belongs to the eukaryotic AdoMetDC family. Pyruvate is required as a cofactor. Is synthesized initially as an inactive proenzyme. Formation of the active enzyme involves a self-maturation process in which the active site pyruvoyl group is generated from an internal serine residue via an autocatalytic post-translational modification. Two non-identical subunits are generated from the proenzyme in this reaction, and the pyruvate is formed at the N-terminus of the alpha chain, which is derived from the carboxyl end of the proenzyme. The post-translation cleavage follows an unusual pathway, termed non-hydrolytic serinolysis, in which the side chain hydroxyl group of the serine supplies its oxygen atom to form the C-terminus of the beta chain, while the remainder of the serine residue undergoes an oxidative deamination to produce ammonia and the pyruvoyl group blocking the N-terminus of the alpha chain.

The catalysed reaction is S-adenosyl-L-methionine + H(+) = S-adenosyl 3-(methylsulfanyl)propylamine + CO2. It participates in amine and polyamine biosynthesis; S-adenosylmethioninamine biosynthesis; S-adenosylmethioninamine from S-adenosyl-L-methionine: step 1/1. The polypeptide is S-adenosylmethionine decarboxylase proenzyme (SAMDC) (Nicotiana tabacum (Common tobacco)).